Consider the following 182-residue polypeptide: Meiotically up-regulated gene 82 protein (182 aa).

A disordered region spans residues 161–182; the sequence is EKRLSEKKYKQKKKTQRRITMD. Basic residues predominate over residues 169-182; sequence YKQKKKTQRRITMD.

This sequence belongs to the prokaryotic/mitochondrial release factor family.

The protein resides in the mitochondrion. Its function is as follows. Has a role in meiosis. This is Meiotically up-regulated gene 82 protein (mug82) from Schizosaccharomyces pombe (strain 972 / ATCC 24843) (Fission yeast).